Here is a 479-residue protein sequence, read N- to C-terminus: Aspartyl/glutamyl-tRNA(Asn/Gln) amidotransferase subunit B (479 aa).

The protein belongs to the GatB/GatE family. GatB subfamily. As to quaternary structure, heterotrimer of A, B and C subunits.

It carries out the reaction L-glutamyl-tRNA(Gln) + L-glutamine + ATP + H2O = L-glutaminyl-tRNA(Gln) + L-glutamate + ADP + phosphate + H(+). It catalyses the reaction L-aspartyl-tRNA(Asn) + L-glutamine + ATP + H2O = L-asparaginyl-tRNA(Asn) + L-glutamate + ADP + phosphate + 2 H(+). In terms of biological role, allows the formation of correctly charged Asn-tRNA(Asn) or Gln-tRNA(Gln) through the transamidation of misacylated Asp-tRNA(Asn) or Glu-tRNA(Gln) in organisms which lack either or both of asparaginyl-tRNA or glutaminyl-tRNA synthetases. The reaction takes place in the presence of glutamine and ATP through an activated phospho-Asp-tRNA(Asn) or phospho-Glu-tRNA(Gln). The chain is Aspartyl/glutamyl-tRNA(Asn/Gln) amidotransferase subunit B from Streptococcus uberis (strain ATCC BAA-854 / 0140J).